Here is a 254-residue protein sequence, read N- to C-terminus: MSTDVSSAENEGGATVRTARVPKYYRLKKHLLDMTRTQTPGTPVPPERTLAAEFDTSRTTVRQALQELVVEGRLERIQGKGTFVAKPKVSQALQLTSYTEDMRAQGLEPTSQLLDIGYITADDRLAGLLDITAGGRVLRIERLRMANGEPMAIETTHLSAKRFPALRRSLVKYTSLYTALAEVYDVHLAEAEETIETSLATPREAGLLGTDVGLPMLMLSRHSQDRTGQPVEWVRSVYRGDRYKFVARLKRPQD.

The 71-residue stretch at 17–87 (RTARVPKYYR…QGKGTFVAKP (71 aa)) folds into the HTH gntR-type domain. Positions 47 to 66 (ERTLAAEFDTSRTTVRQALQ) form a DNA-binding region, H-T-H motif.

The protein localises to the cytoplasm. Binding to the target genes is abolished by GlcN6P, a central molecule in N-acetylglucosamine metabolism. Global regulator that is part of the nutrient-sensing system. In the absence of glucosamine 6-P (GlcN6P), represses the phosphotransferase system (PTS) specific for the uptake of N-acetylglucosamine (PTSNag), and genes involved in the metabolism of chitin, as well as several genes involved in development, thereby linking carbon availability to morphogenesis. Also regulates the expression of the ABC transporters DasABC and NgcEFG, which are involved in N,N'-diacetylchitobiose ((GlcNAc)2) uptake. Binds to the DNA consensus sequence 5'-ACTGGTCTAGACCACT-3'. The protein is HTH-type transcriptional repressor DasR (dasR) of Streptomyces coelicolor (strain ATCC BAA-471 / A3(2) / M145).